The primary structure comprises 589 residues: Probable translation initiation factor IF-2 (589 aa).

Residues 3–224 (VRSPFVVVMG…AGVSQRFIPR (222 aa)) form the tr-type G domain. The segment at 12–19 (GHVDVGKT) is G1. A GTP-binding site is contributed by 12-19 (GHVDVGKT). Residues 37–41 (MITQH) form a G2 region. Residues 78–81 (DTPG) are G3. GTP-binding positions include 78–82 (DTPGH) and 132–135 (NKLD). The tract at residues 132-135 (NKLD) is G4. The tract at residues 200-202 (SAV) is G5.

Belongs to the TRAFAC class translation factor GTPase superfamily. Classic translation factor GTPase family. IF-2 subfamily.

Function in general translation initiation by promoting the binding of the formylmethionine-tRNA to ribosomes. Seems to function along with eIF-2. This chain is Probable translation initiation factor IF-2, found in Pyrobaculum neutrophilum (strain DSM 2338 / JCM 9278 / NBRC 100436 / V24Sta) (Thermoproteus neutrophilus).